The sequence spans 196 residues: Endoribonuclease YbeY (196 aa).

The Zn(2+) site is built by His-120, His-124, and His-130.

This sequence belongs to the endoribonuclease YbeY family. Zn(2+) serves as cofactor.

The protein localises to the cytoplasm. Single strand-specific metallo-endoribonuclease involved in late-stage 70S ribosome quality control and in maturation of the 3' terminus of the 16S rRNA. In Corynebacterium glutamicum (strain ATCC 13032 / DSM 20300 / JCM 1318 / BCRC 11384 / CCUG 27702 / LMG 3730 / NBRC 12168 / NCIMB 10025 / NRRL B-2784 / 534), this protein is Endoribonuclease YbeY.